We begin with the raw amino-acid sequence, 150 residues long: Large ribosomal subunit protein bL9 (150 aa).

Belongs to the bacterial ribosomal protein bL9 family.

Its function is as follows. Binds to the 23S rRNA. The protein is Large ribosomal subunit protein bL9 of Paraburkholderia phytofirmans (strain DSM 17436 / LMG 22146 / PsJN) (Burkholderia phytofirmans).